Consider the following 89-residue polypeptide: Small ribosomal subunit protein uS15 (89 aa).

Belongs to the universal ribosomal protein uS15 family. As to quaternary structure, part of the 30S ribosomal subunit. Forms a bridge to the 50S subunit in the 70S ribosome, contacting the 23S rRNA.

Functionally, one of the primary rRNA binding proteins, it binds directly to 16S rRNA where it helps nucleate assembly of the platform of the 30S subunit by binding and bridging several RNA helices of the 16S rRNA. Forms an intersubunit bridge (bridge B4) with the 23S rRNA of the 50S subunit in the ribosome. This chain is Small ribosomal subunit protein uS15, found in Proteus mirabilis (strain HI4320).